The chain runs to 594 residues: Zinc finger protein 37 (594 aa).

The disordered stretch occupies residues 1 to 253 (MATSEPAESD…KPEKAPGSGK (253 aa)). Position 3 is a phosphothreonine (threonine 3). The KRAB domain occupies 3–74 (TSEPAESDAV…GKKASPSSLK (72 aa)). Serine 9 is modified (phosphoserine). Basic and acidic residues predominate over residues 10 to 33 (DAVRAKEWEQLEPVQRDVYKDTKL). Positions 34 to 46 (ENCSNPASMGNQD) are enriched in polar residues. Residues 89–111 (QQDDEHREEKQKSQSKLTKEVTL) show a composition bias toward basic and acidic residues. Polar residues predominate over residues 145 to 158 (KSSSRGKNSNQNSD). 2 stretches are compositionally biased toward basic and acidic residues: residues 159–172 (SLKK…DHRK) and 181–234 (VNKD…TGEK). 12 consecutive C2H2-type zinc fingers follow at residues 255–277 (YECN…QRTH), 283–305 (YECN…QRTH), 311–324 (YECE…GHKH), 339–361 (YKCN…LRSH), 367–389 (YECK…VRTH), 395–417 (YECN…MRIH), 423–445 (FECN…QRTH), 451–473 (YKCD…MRTH), 479–501 (FECN…QRVH), 507–529 (YECV…QRTH), 535–557 (FECY…QRSH), and 563–585 (YECI…MKIH).

This sequence belongs to the krueppel C2H2-type zinc-finger protein family. Expressed in testis and brain.

Its subcellular location is the nucleus. Its function is as follows. May have a role in regulating spermiogenesis. The chain is Zinc finger protein 37 (Zfp37) from Mus musculus (Mouse).